Reading from the N-terminus, the 426-residue chain is Chaperone SurA (426 aa).

The first 19 residues, 1–19 (MGRVLVTIFVLFWPIGSFA), serve as a signal peptide directing secretion. 2 PpiC domains span residues 169 to 270 (DAQY…KLLD) and 280 to 379 (VTQT…QVLD).

It localises to the periplasm. The catalysed reaction is [protein]-peptidylproline (omega=180) = [protein]-peptidylproline (omega=0). In terms of biological role, chaperone involved in the correct folding and assembly of outer membrane proteins. Recognizes specific patterns of aromatic residues and the orientation of their side chains, which are found more frequently in integral outer membrane proteins. May act in both early periplasmic and late outer membrane-associated steps of protein maturation. This is Chaperone SurA from Nitrosococcus oceani (strain ATCC 19707 / BCRC 17464 / JCM 30415 / NCIMB 11848 / C-107).